A 621-amino-acid chain; its full sequence is MSFDISKFPVLAKANTPEELRKLPQGLLPQVSDELRQFLLQSVAISSGHFASGLGTVELTVALHYVYNTPFDQLVWDVGHQAYPHKILTDRREQMHTIRQKNGLHPFPWREESPYDTFSVGHSGTSVSAALGMAIAAGKEGVGRKVVAVIGDGAMTGGMVFEALNHAGDLHNDMLVVLNDNEMSISENVGALNNHLAQLMSGRFYTTIRENSKKVLKGMPVIKEMAKRTEEHLKGMVVPATLFEELGFNYIGPIDGHDVDSLVETMRNMRNLKGPQILHIMTKKGRGYEPAEKDPIGWHAVPKFDPSQFKKPTTKPGLPTFSQVFGKWLCDMAATDDKLVAITPAMREGSGMVEFSQRFPSQYFDAAIAEQHAVTLAAGFACAGLKPVVAIYSTFLQRGYDQLIHDVALQRLPVLFAIDRGGIVGADGPTHQGAFDLSFMRCIPNMIIMAPSDENECRQMLYTGYCYQDGPTAVRYPRGFATGAEQIDTMTMIPIGKGVLTRQGQKIAIVNFGTTLEAATDAAEKLDATIADMRFVKPLDLGLLEQLANSHDVIVTVEENAIMGGAGSGVIEALHKMRIVKPVLQIGLPDEFIKHGAPDEITAELQLDAQGILAQIQAFMA.

Thiamine diphosphate contacts are provided by residues His80 and 121–123; that span reads GHS. A Mg(2+)-binding site is contributed by Asp152. Residues 153–154, Asn181, Tyr288, and Glu370 each bind thiamine diphosphate; that span reads GA. Residue Asn181 participates in Mg(2+) binding.

The protein belongs to the transketolase family. DXPS subfamily. As to quaternary structure, homodimer. Mg(2+) serves as cofactor. The cofactor is thiamine diphosphate.

The catalysed reaction is D-glyceraldehyde 3-phosphate + pyruvate + H(+) = 1-deoxy-D-xylulose 5-phosphate + CO2. The protein operates within metabolic intermediate biosynthesis; 1-deoxy-D-xylulose 5-phosphate biosynthesis; 1-deoxy-D-xylulose 5-phosphate from D-glyceraldehyde 3-phosphate and pyruvate: step 1/1. Catalyzes the acyloin condensation reaction between C atoms 2 and 3 of pyruvate and glyceraldehyde 3-phosphate to yield 1-deoxy-D-xylulose-5-phosphate (DXP). This chain is 1-deoxy-D-xylulose-5-phosphate synthase, found in Shewanella frigidimarina (strain NCIMB 400).